Consider the following 533-residue polypeptide: Acyl-CoA-binding domain-containing protein 5 (533 aa).

Residues 42–131 (HETRFEAAVK…MKKILETMPM (90 aa)) enclose the ACB domain. Residues 53–62 (IQSLPKNGSF), 73–77 (YSFYK), lysine 99, and tyrosine 118 each bind an acyl-CoA. Residues 182-227 (TPNAKTVNGKAESSDSGAESEEEAAQEDPKRPEPRDSDKKMMKKSA) are disordered. Phosphoserine occurs at positions 194, 195, 197, and 201. Over residues 208–227 (EDPKRPEPRDSDKKMMKKSA) the composition is skewed to basic and acidic residues. Residues serine 244 and serine 314 each carry the phosphoserine modification. A disordered region spans residues 339–443 (GGNPSQPLES…ERWGSDRGSR (105 aa)). Residues 374–383 (GKGEVKRGGE) are compositionally biased toward basic and acidic residues. Position 429 is a phosphoserine (serine 429). Residues 432-442 (DGERWGSDRGS) are compositionally biased toward basic and acidic residues. Residues 448 to 478 (EQIALVLMRLQEDMQNVLQRLHKLEMLAASQ) are a coiled coil. An N6-acetyllysine modification is found at lysine 470. The chain crosses the membrane as a helical span at residues 503–525 (SPGALTFAIIWPFIAQWLVHLYY).

It belongs to the ATG37 family. As to expression, highly expressed in brain and liver. Lower levels of expression in spleen and heart.

It localises to the peroxisome membrane. Its function is as follows. Acyl-CoA binding protein which acts as the peroxisome receptor for pexophagy but is dispensable for aggrephagy and nonselective autophagy. Binds medium- and long-chain acyl-CoA esters. The protein is Acyl-CoA-binding domain-containing protein 5 (ACBD5) of Bos taurus (Bovine).